The primary structure comprises 394 residues: Sugar efflux transporter C (394 aa).

The Periplasmic segment spans residues 1–10; sequence MQKTATTPSK. The chain crosses the membrane as a helical span at residues 11–31; sequence ILDLTAAAFLLVAFLTGIAGA. At 32–49 the chain is on the cytoplasmic side; sequence LQTPTLSIFLADELKARP. A helical transmembrane segment spans residues 50 to 70; it reads IMVGFFFTGSAIMGILVSQFL. Over 71 to 80 the chain is Periplasmic; the sequence is ARHSDKQGDR. The helical transmembrane segment at 81–101 threads the bilayer; the sequence is KLLILLCCLFGVLACTLFAWN. At 102–104 the chain is on the cytoplasmic side; it reads RNY. A helical transmembrane segment spans residues 105 to 125; it reads FILLSTGVLLSSFASTANPQM. At 126 to 150 the chain is on the periplasmic side; that stretch reads FALAREHADRTGRETVMFSTFLRAQ. A helical membrane pass occupies residues 151-171; sequence ISLAWVIGPPLAYELAMGFSF. Residue Lys-172 is a topological domain, cytoplasmic. Residues 173-193 form a helical membrane-spanning segment; sequence VMYLTAAIAFVVCGLIVWLFL. The Periplasmic segment spans residues 194 to 224; it reads PSIQRNIPVVTQPVEILPSTHRKRDTRLLFV. A helical transmembrane segment spans residues 225 to 245; the sequence is VCSMMWAANNLYMINMPLFII. Over 246–253 the chain is Cytoplasmic; sequence DELHLTDK. Residues 254–274 form a helical membrane-spanning segment; that stretch reads LTGEMIGIAAGLEIPMMLIAG. At 275–283 the chain is on the periplasmic side; sequence YYMKRIGKR. A helical transmembrane segment spans residues 284 to 304; that stretch reads LLMLIAIVSGMCFYASVLMAT. The Cytoplasmic segment spans residues 305-310; that stretch reads TPAVEL. Residues 311 to 331 form a helical membrane-spanning segment; it reads ELQILNAIFLGILCGIGMLYF. Topologically, residues 332–370 are periplasmic; that stretch reads QDLMPEKIGSATTLYANTSRVGWIIAGSVDGIMVEIWSY. A helical membrane pass occupies residues 371 to 391; sequence HALFWLAIGMLGIAMICLLFI. Over 392 to 394 the chain is Cytoplasmic; it reads KDI.

This sequence belongs to the major facilitator superfamily. Set transporter family.

It localises to the cell inner membrane. Its function is as follows. Involved in the efflux of sugars. The physiological role may be the detoxification of non-metabolizable sugar analogs. This Escherichia coli (strain K12) protein is Sugar efflux transporter C (setC).